A 501-amino-acid chain; its full sequence is Lysine--tRNA ligase (501 aa).

Mg(2+) contacts are provided by glutamate 402 and glutamate 409.

It belongs to the class-II aminoacyl-tRNA synthetase family. As to quaternary structure, homodimer. It depends on Mg(2+) as a cofactor.

The protein localises to the cytoplasm. It carries out the reaction tRNA(Lys) + L-lysine + ATP = L-lysyl-tRNA(Lys) + AMP + diphosphate. This chain is Lysine--tRNA ligase (lysS), found in Helicobacter pylori (strain J99 / ATCC 700824) (Campylobacter pylori J99).